The chain runs to 228 residues: Homeobox protein Hox-B6a (228 aa).

The Antp-type hexapeptide signature appears at 132–137 (VYPWMQ). Positions 150 to 209 (GRRGRQTYTRYQTLELEKEFHFNRYLTRRRRIEIAHALCLTERQIKIWFQNRRMKWKKEN) form a DNA-binding region, homeobox.

The protein belongs to the Antp homeobox family.

It is found in the nucleus. Sequence-specific transcription factor which is part of a developmental regulatory system that provides cells with specific positional identities on the anterior-posterior axis. This Danio rerio (Zebrafish) protein is Homeobox protein Hox-B6a (hoxb6a).